A 138-amino-acid polypeptide reads, in one-letter code: Large ribosomal subunit protein uL14m (138 aa).

The protein belongs to the universal ribosomal protein uL14 family. In terms of assembly, component of the mitochondrial large ribosomal subunit (mt-LSU). Mature yeast 74S mitochondrial ribosomes consist of a small (37S) and a large (54S) subunit. The 37S small subunit contains a 15S ribosomal RNA (15S mt-rRNA) and 34 different proteins. The 54S large subunit contains a 21S rRNA (21S mt-rRNA) and 46 different proteins.

Its subcellular location is the mitochondrion. Its function is as follows. Component of the mitochondrial ribosome (mitoribosome), a dedicated translation machinery responsible for the synthesis of mitochondrial genome-encoded proteins, including at least some of the essential transmembrane subunits of the mitochondrial respiratory chain. The mitoribosomes are attached to the mitochondrial inner membrane and translation products are cotranslationally integrated into the membrane. The chain is Large ribosomal subunit protein uL14m (MRPL38) from Saccharomyces cerevisiae (strain ATCC 204508 / S288c) (Baker's yeast).